The following is a 63-amino-acid chain: Hirudin (63 aa).

Positions 1 to 3 (VVY) are interaction with thrombin active site. 3 disulfides stabilise this stretch: cysteine 6/cysteine 14, cysteine 16/cysteine 28, and cysteine 22/cysteine 39. Positions 39-63 (CVTGEGTPGPQSHNDGDFEEPEEYL) are disordered. Threonine 45 is a glycosylation site (O-linked (GalNAc...) threonine). The interval 55 to 63 (DFEEPEEYL) is interaction with fibrinogen-binding exosite of thrombin. Residue tyrosine 62 is modified to Sulfotyrosine.

This sequence belongs to the protease inhibitor I14 (hirudin) family.

It localises to the secreted. Its function is as follows. Hirudin is a potent thrombin-specific protease inhibitor. It forms a stable non-covalent complex with alpha-thrombin, thereby abolishing its ability to cleave fibrinogen. The polypeptide is Hirudin (Poecilobdella viridis (Indian freshwater leech)).